Here is a 487-residue protein sequence, read N- to C-terminus: UDP-N-acetylmuramate--L-alanine ligase (487 aa).

126-132 serves as a coordination point for ATP; the sequence is GTHGKTT.

Belongs to the MurCDEF family.

It is found in the cytoplasm. The enzyme catalyses UDP-N-acetyl-alpha-D-muramate + L-alanine + ATP = UDP-N-acetyl-alpha-D-muramoyl-L-alanine + ADP + phosphate + H(+). It participates in cell wall biogenesis; peptidoglycan biosynthesis. Functionally, cell wall formation. The sequence is that of UDP-N-acetylmuramate--L-alanine ligase from Proteus mirabilis (strain HI4320).